Consider the following 389-residue polypeptide: (S)-8-oxocitronellyl enol synthase CYC1 (389 aa).

Residues 34-36, 62-63, 80-81, 104-105, and Q138 each bind NADP(+); these read TGI, RR, DV, and AW. Active-site residues include K142 and Y174. Residues K142 and Y174 each coordinate substrate. NADP(+)-binding positions include Y174, V201, and 208-210; that span reads SMM. A substrate-binding site is contributed by S350.

Belongs to the short-chain dehydrogenases/reductases (SDR) family. Highly divergent.

The enzyme catalyses (S)-8-oxocitronellyl enol + NADP(+) = (6E)-8-oxogeranial + NADPH + H(+). The catalysed reaction is (S)-8-oxocitronellyl enol + NAD(+) = (6E)-8-oxogeranial + NADH + H(+). Iridoid synthase that catalyzes the first step in generation of the iridoid ring scaffold using the linear monoterpene (6E)-8-oxogeranial as substrate. Iridoids comprise a large family of distinctive bicyclic monoterpenes that possess a wide range of pharmacological activities, including anticancer, anti-inflammatory, antifungal and antibacterial activities. The sequence is that of (S)-8-oxocitronellyl enol synthase CYC1 from Camptotheca acuminata (Happy tree).